The primary structure comprises 357 residues: Peptide chain release factor 1 (357 aa).

N5-methylglutamine is present on Gln-235. Residues 285 to 305 form a disordered region; that stretch reads KRHNEASAMRSAQVGSGDRSE.

The protein belongs to the prokaryotic/mitochondrial release factor family. Post-translationally, methylated by PrmC. Methylation increases the termination efficiency of RF1.

The protein resides in the cytoplasm. Functionally, peptide chain release factor 1 directs the termination of translation in response to the peptide chain termination codons UAG and UAA. This is Peptide chain release factor 1 (prfA) from Chlamydia pneumoniae (Chlamydophila pneumoniae).